Reading from the N-terminus, the 126-residue chain is S-adenosylmethionine decarboxylase proenzyme (126 aa).

Catalysis depends on Ser63, which acts as the Schiff-base intermediate with substrate; via pyruvic acid. Ser63 is modified (pyruvic acid (Ser); by autocatalysis). The active-site Proton acceptor; for processing activity is the His68. The active-site Proton donor; for catalytic activity is the Cys83.

It belongs to the prokaryotic AdoMetDC family. Type 1 subfamily. As to quaternary structure, heterotetramer of two alpha and two beta chains arranged as a dimer of alpha/beta heterodimers. The cofactor is pyruvate. In terms of processing, is synthesized initially as an inactive proenzyme. Formation of the active enzyme involves a self-maturation process in which the active site pyruvoyl group is generated from an internal serine residue via an autocatalytic post-translational modification. Two non-identical subunits are generated from the proenzyme in this reaction, and the pyruvate is formed at the N-terminus of the alpha chain, which is derived from the carboxyl end of the proenzyme. The post-translation cleavage follows an unusual pathway, termed non-hydrolytic serinolysis, in which the side chain hydroxyl group of the serine supplies its oxygen atom to form the C-terminus of the beta chain, while the remainder of the serine residue undergoes an oxidative deamination to produce ammonia and the pyruvoyl group blocking the N-terminus of the alpha chain.

The catalysed reaction is S-adenosyl-L-methionine + H(+) = S-adenosyl 3-(methylsulfanyl)propylamine + CO2. Its pathway is amine and polyamine biosynthesis; S-adenosylmethioninamine biosynthesis; S-adenosylmethioninamine from S-adenosyl-L-methionine: step 1/1. Its function is as follows. Catalyzes the decarboxylation of S-adenosylmethionine to S-adenosylmethioninamine (dcAdoMet), the propylamine donor required for the synthesis of the polyamines spermine and spermidine from the diamine putrescine. This chain is S-adenosylmethionine decarboxylase proenzyme, found in Syntrophomonas wolfei subsp. wolfei (strain DSM 2245B / Goettingen).